A 133-amino-acid polypeptide reads, in one-letter code: L-ectoine synthase (133 aa).

The protein belongs to the ectoine synthase family.

It carries out the reaction (2S)-4-acetamido-2-aminobutanoate = L-ectoine + H2O. It functions in the pathway amine and polyamine biosynthesis; ectoine biosynthesis; L-ectoine from L-aspartate 4-semialdehyde: step 3/3. Catalyzes the circularization of gamma-N-acetyl-alpha,gamma-diaminobutyric acid (ADABA) to ectoine (1,4,5,6-tetrahydro-2-methyl-4-pyrimidine carboxylic acid), which is an excellent osmoprotectant. This Bordetella petrii (strain ATCC BAA-461 / DSM 12804 / CCUG 43448) protein is L-ectoine synthase.